We begin with the raw amino-acid sequence, 375 residues long: o-succinylbenzoate synthase (375 aa).

Residue Lys166 is the Proton donor of the active site. Positions 191, 216, and 241 each coordinate Mg(2+). Catalysis depends on Lys265, which acts as the Proton acceptor.

Belongs to the mandelate racemase/muconate lactonizing enzyme family. MenC type 2 subfamily. Homotetramer. A divalent metal cation is required as a cofactor.

It catalyses the reaction (1R,6R)-6-hydroxy-2-succinyl-cyclohexa-2,4-diene-1-carboxylate = 2-succinylbenzoate + H2O. The catalysed reaction is N-acetyl-D-methionine = N-acetyl-L-methionine. It carries out the reaction N-acetyl-D-phenylalanine = N-acetyl-L-phenylalanine. The protein operates within quinol/quinone metabolism; 1,4-dihydroxy-2-naphthoate biosynthesis; 1,4-dihydroxy-2-naphthoate from chorismate: step 4/7. It participates in quinol/quinone metabolism; menaquinone biosynthesis. In terms of biological role, converts 2-succinyl-6-hydroxy-2,4-cyclohexadiene-1-carboxylate (SHCHC) to 2-succinylbenzoate (OSB). Also acts as a N-succinylamino acid racemase (NSAR) that catalyzes the racemization of various N-succinylamino acids, including N-succinyl-alanine and N-succinyl-phenylalanine. Can catalyze the racemization of a broad range of N-acylamino acids, including N-acetyl-methionine, N-acetyl-phenylalanine, N-carbamoyl-methionine, N-formyl-D-methionine, N-formyl-D-norleucine and N-carbamoyl-D-norleucine. May be a bifunctional enzyme involved in menaquinone biosynthesis and in an irreversible pathway for the conversion of D- to L-amino acids, thereby facilitating the survival and/or growth of the organism. This Geobacillus kaustophilus protein is o-succinylbenzoate synthase.